Reading from the N-terminus, the 620-residue chain is Arginine--tRNA ligase (620 aa).

The short motif at alanine 147 to glycine 157 is the 'HIGH' region element.

It belongs to the class-I aminoacyl-tRNA synthetase family. In terms of assembly, monomer.

It localises to the cytoplasm. It carries out the reaction tRNA(Arg) + L-arginine + ATP = L-arginyl-tRNA(Arg) + AMP + diphosphate. In Bifidobacterium longum (strain DJO10A), this protein is Arginine--tRNA ligase.